We begin with the raw amino-acid sequence, 119 residues long: DNA-binding protein inhibitor ID-3 (119 aa).

The bHLH domain occupies 28-80 (RGKSPSTEEPLSLLDDMNHCYSRLRELVPGVPRGTQLSQVEILQRVIDYILDL). The interval 35 to 87 (EEPLSLLDDMNHCYSRLRELVPGVPRGTQLSQVEILQRVIDYILDLQVVLAEP) is interaction with IFI204.

As to quaternary structure, homodimer, and heterodimer with other HLH proteins. Interacts with CLOCK and BMAL1. Interacts with COPS5 and COPS7A. Interacts with IFI204. Interacts with GATA4 and NKX2-5. Interacts with ANKRD2; both proteins cooperate in myoblast differentiation. Polyubiquitinated; which is favored by Ifi204 and leads to proteasomal degradation. Expressed by myoblasts (at protein level).

It localises to the nucleus. The protein resides in the cytoplasm. Its function is as follows. Transcriptional regulator (lacking a basic DNA binding domain) which negatively regulates the basic helix-loop-helix (bHLH) transcription factors by forming heterodimers and inhibiting their DNA binding and transcriptional activity. Implicated in regulating a variety of cellular processes, including cellular growth, senescence, differentiation, apoptosis, angiogenesis, and neoplastic transformation. Involved in myogenesis by inhibiting skeletal muscle and cardiac myocyte differentiation and promoting muscle precursor cells proliferation. Inhibits the binding of E2A-containing protein complexes to muscle creatine kinase E-box enhancer. Regulates the circadian clock by repressing the transcriptional activator activity of the CLOCK-BMAL1 heterodimer. The sequence is that of DNA-binding protein inhibitor ID-3 (Id3) from Mus musculus (Mouse).